Reading from the N-terminus, the 277-residue chain is Prohibitin-3, mitochondrial (277 aa).

Glycine 2 carries the N-acetylglycine modification. Residues 2–6 (GSQQA) lie on the Mitochondrial matrix side of the membrane. A helical; Signal-anchor for type II membrane protein transmembrane segment spans residues 7-28 (AVSFLSNLAKAAFGLGTAATVL). The Mitochondrial intermembrane segment spans residues 29–277 (NTSLFTVDGG…GQSMLFALNR (249 aa)).

Belongs to the prohibitin family. As to quaternary structure, component of a prohibitin multimeric complex in mitochondrial membranes. In terms of tissue distribution, mostly expressed in proliferative tissues, including vasculature, shoot and root apical tissues. Expressed in roots, stems, leaves and flowers (at protein level).

Its subcellular location is the cell membrane. It localises to the mitochondrion inner membrane. The protein resides in the nucleus. The protein localises to the cytoplasm. Functionally, prohibitin probably acts as a holdase/unfoldase for the stabilization of newly synthesized mitochondrial proteins. Necessary for mitochondrial and cell metabolism and biogenesis. Required to regulate the ethylene-mediated signaling; involved in growth maintenance in the presence of ethylene. Functions in nitric oxide (NO)-mediated responses and in hydrogen peroxide-induced NO accumulation. The protein is Prohibitin-3, mitochondrial (PHB3) of Arabidopsis thaliana (Mouse-ear cress).